Consider the following 245-residue polypeptide: Orotidine 5'-phosphate decarboxylase (245 aa).

Residues D22, K44, 71-80 (DLKFHDIPNT), T131, R192, Q201, G221, and R222 contribute to the substrate site. K73 acts as the Proton donor in catalysis.

Belongs to the OMP decarboxylase family. Type 1 subfamily. In terms of assembly, homodimer.

The catalysed reaction is orotidine 5'-phosphate + H(+) = UMP + CO2. It participates in pyrimidine metabolism; UMP biosynthesis via de novo pathway; UMP from orotate: step 2/2. Its function is as follows. Catalyzes the decarboxylation of orotidine 5'-monophosphate (OMP) to uridine 5'-monophosphate (UMP). In Escherichia coli (strain K12 / MC4100 / BW2952), this protein is Orotidine 5'-phosphate decarboxylase.